The chain runs to 555 residues: Steroid-22-oyl-CoA synthetase (555 aa).

Belongs to the ATP-dependent AMP-binding enzyme family.

The enzyme catalyses 3-oxochol-4-en-22-oate + ATP + CoA = 3-oxochol-4-en-22-oyl-CoA + AMP + diphosphate. The catalysed reaction is 3-hydroxy-9-oxo-9,10-seco-chola-1,3,5-trien-22-oate + ATP + CoA = 3-hydroxy-9-oxo-9,10-seco-chola-1,3,5-trien-22-oyl-CoA + AMP + diphosphate. It functions in the pathway steroid metabolism. Functionally, involved in cholate catabolism. Catalyzes the ATP-dependent formation of CoA thioesters of steroids with isopropanoyl side chains, likely occurring as degradation intermediates. Can use 4-BNC, HSBNC and HIDP as substrate. In Rhodococcus jostii (strain RHA1), this protein is Steroid-22-oyl-CoA synthetase.